The following is a 316-amino-acid chain: Putative S-adenosyl-L-methionine-dependent methyltransferase MAB_4606c (316 aa).

S-adenosyl-L-methionine is bound by residues D137 and 166–167; that span reads DL.

It belongs to the UPF0677 family.

In terms of biological role, exhibits S-adenosyl-L-methionine-dependent methyltransferase activity. The sequence is that of Putative S-adenosyl-L-methionine-dependent methyltransferase MAB_4606c from Mycobacteroides abscessus (strain ATCC 19977 / DSM 44196 / CCUG 20993 / CIP 104536 / JCM 13569 / NCTC 13031 / TMC 1543 / L948) (Mycobacterium abscessus).